We begin with the raw amino-acid sequence, 213 residues long: MEALYQSTNFLLQKVQHDLGRLEGTQNEQDAQVVVQCIYGDVITLKENCQTLDNYVSREPPARRQAARMRVDQLRADVHRVDMAVSAVHTRMTQRWRAATERDELLRTRYRPNDTALSIGDHELLLNDRLQSSHTHLDDLISQGSAVLENLKSQHLNLRGVGRKMHEIGQALGLSNSTLQVIDRRVREDWILFVIGCIVCCIFMYAFYRFWRG.

The Cytoplasmic portion of the chain corresponds to 1-189 (MEALYQSTNF…QVIDRRVRED (189 aa)). A helical; Anchor for type IV membrane protein transmembrane segment spans residues 190-210 (WILFVIGCIVCCIFMYAFYRF). Residues 211-213 (WRG) lie on the Vesicular side of the membrane.

Belongs to the GOSR2 family. Part of a unique SNARE complex.

The protein resides in the golgi apparatus. It localises to the cis-Golgi network membrane. Its subcellular location is the golgi apparatus membrane. The protein localises to the endoplasmic reticulum membrane. In terms of biological role, involved in transport of proteins from the cis/medial-Golgi to the trans-Golgi network. This chain is Golgi SNAP receptor complex member 2 homolog memb-1, found in Caenorhabditis elegans.